The primary structure comprises 444 residues: MTYIPTTAAEQQQMLAACGAHRMEELFSDVPASVRLGRELNLPRPMAEAEVWRHLEELAGKNKKLVSFLGAGAYEHYIPSVVGHLLARSEFYTAYTPYQPEISQGTLQAIFEFQSLICELTGLDVATASHYDGATAMAEAALVACNATRRQKILVSRSVNPQYRTVLSTYAKGQGVELAEVPLQDGRTDLEALEKLAGKDVAGVILQNPNFFGQIEAMAEATDLAHKARALGIAVVDPVSLGLLAAPGEYGADLAVGEGQSLGNPLNFGGPYLGFIAAREKLVRRLPGRIVGQTKDVDGKRAYVLTLQAREQHIRREKATSNICSNEALCALAATIYLAAMGREGLKEVASQCLLKAHYAQKKLAALPGVTPVFNGPFFHEFVLQTKLSPATVARRLAENGFAAGFDLGRFYPELKNALLFTVTEVRTREEIDALVAAMRGILA.

Belongs to the GcvP family. N-terminal subunit subfamily. As to quaternary structure, the glycine cleavage system is composed of four proteins: P, T, L and H. In this organism, the P 'protein' is a heterodimer of two subunits.

The catalysed reaction is N(6)-[(R)-lipoyl]-L-lysyl-[glycine-cleavage complex H protein] + glycine + H(+) = N(6)-[(R)-S(8)-aminomethyldihydrolipoyl]-L-lysyl-[glycine-cleavage complex H protein] + CO2. In terms of biological role, the glycine cleavage system catalyzes the degradation of glycine. The P protein binds the alpha-amino group of glycine through its pyridoxal phosphate cofactor; CO(2) is released and the remaining methylamine moiety is then transferred to the lipoamide cofactor of the H protein. The polypeptide is Probable glycine dehydrogenase (decarboxylating) subunit 1 (Moorella thermoacetica (strain ATCC 39073 / JCM 9320)).